The chain runs to 626 residues: Anaphase-promoting complex subunit CDC23 (626 aa).

Serine 59 is subject to Phosphoserine; by CDC28. TPR repeat units follow at residues alanine 215–asparagine 248, methionine 295–phenylalanine 328, threonine 329–arginine 362, leucine 363–arginine 396, proline 397–threonine 430, threonine 431–aspartate 464, phenylalanine 465–aspartate 498, arginine 499–valine 532, and threonine 536–leucine 569.

Belongs to the APC8/CDC23 family. The APC/C is composed of at least 13 subunits that stay tightly associated throughout the cell cycle: APC1, APC2, APC4, APC5, APC9, APC11, CDC16, CDC23, CDC26, CDC27, DOC1, MND2 and SWM1. CDC23 interacts directly with SWM1 and binds the destruction box (D-box) of the substrate cyclin CLB2. In terms of processing, phosphorylated by CDC28, which is required for the early mitotic activity of the APC/C in its CDC20-bound form.

It is found in the nucleus. The protein localises to the chromosome. It localises to the centromere. Its subcellular location is the kinetochore. The protein operates within protein modification; protein ubiquitination. In terms of biological role, component of the anaphase promoting complex/cyclosome (APC/C), a cell cycle-regulated E3 ubiquitin-protein ligase complex that controls progression through mitosis and the G1 phase of the cell cycle. The APC/C is thought to confer substrate specificity and, in the presence of ubiquitin-conjugating E2 enzymes, it catalyzes the formation of protein-ubiquitin conjugates that are subsequently degraded by the 26S proteasome. In early mitosis, the APC/C is activated by CDC20 and targets securin PDS1, the B-type cyclin CLB5, and other anaphase inhibitory proteins for proteolysis, thereby triggering the separation of sister chromatids at the metaphase-to-anaphase transition. In late mitosis and in G1, degradation of CLB5 allows activation of the APC/C by CDH1, which is needed to destroy CDC20 and the B-type cyclin CLB2 to allow exit from mitosis and creating the low CDK state necessary for cytokinesis and for reforming prereplicative complexes in G1 prior to another round of replication. The polypeptide is Anaphase-promoting complex subunit CDC23 (CDC23) (Saccharomyces cerevisiae (strain ATCC 204508 / S288c) (Baker's yeast)).